We begin with the raw amino-acid sequence, 265 residues long: Hydroxyethylthiazole kinase (265 aa).

Met-43 is a substrate binding site. Lys-118 and Thr-165 together coordinate ATP. Gly-192 serves as a coordination point for substrate.

Belongs to the Thz kinase family. The cofactor is Mg(2+).

It catalyses the reaction 5-(2-hydroxyethyl)-4-methylthiazole + ATP = 4-methyl-5-(2-phosphooxyethyl)-thiazole + ADP + H(+). The protein operates within cofactor biosynthesis; thiamine diphosphate biosynthesis; 4-methyl-5-(2-phosphoethyl)-thiazole from 5-(2-hydroxyethyl)-4-methylthiazole: step 1/1. In terms of biological role, catalyzes the phosphorylation of the hydroxyl group of 4-methyl-5-beta-hydroxyethylthiazole (THZ). The protein is Hydroxyethylthiazole kinase of Pyrococcus horikoshii (strain ATCC 700860 / DSM 12428 / JCM 9974 / NBRC 100139 / OT-3).